The primary structure comprises 396 residues: Probable glucan endo-1,6-beta-glucosidase B (396 aa).

A signal peptide spans Met1–Ala17. An N-linked (GlcNAc...) asparagine glycan is attached at Asn30. Residue Glu219 is the Proton donor of the active site. N-linked (GlcNAc...) asparagine glycosylation is present at Asn272. Glu320 (nucleophile) is an active-site residue.

It belongs to the glycosyl hydrolase 5 (cellulase A) family.

The protein resides in the secreted. It catalyses the reaction Random hydrolysis of (1-&gt;6)-linkages in (1-&gt;6)-beta-D-glucans.. In terms of biological role, beta-glucanases participate in the metabolism of beta-glucan, the main structural component of the cell wall. Acts on lutean, pustulan and 1,6-oligo-beta-D-glucosides. In Aspergillus fumigatus (strain ATCC MYA-4609 / CBS 101355 / FGSC A1100 / Af293) (Neosartorya fumigata), this protein is Probable glucan endo-1,6-beta-glucosidase B (exgB).